Reading from the N-terminus, the 305-residue chain is Glutaminase (305 aa).

7 residues coordinate substrate: Ser61, Asn113, Glu158, Asn165, Tyr189, Tyr241, and Val259.

Belongs to the glutaminase family. Homotetramer.

It catalyses the reaction L-glutamine + H2O = L-glutamate + NH4(+). In Alkaliphilus oremlandii (strain OhILAs) (Clostridium oremlandii (strain OhILAs)), this protein is Glutaminase.